A 941-amino-acid polypeptide reads, in one-letter code: Isoleucine--tRNA ligase (941 aa).

A 'HIGH' region motif is present at residues 59–69 (PYANGNIHIGH). Glu562 contacts L-isoleucyl-5'-AMP. Residues 603 to 607 (KMSKS) carry the 'KMSKS' region motif. Residue Lys606 participates in ATP binding. The Zn(2+) site is built by Cys904, Cys907, Cys924, and Cys927.

The protein belongs to the class-I aminoacyl-tRNA synthetase family. IleS type 1 subfamily. In terms of assembly, monomer. It depends on Zn(2+) as a cofactor.

The protein localises to the cytoplasm. The enzyme catalyses tRNA(Ile) + L-isoleucine + ATP = L-isoleucyl-tRNA(Ile) + AMP + diphosphate. In terms of biological role, catalyzes the attachment of isoleucine to tRNA(Ile). As IleRS can inadvertently accommodate and process structurally similar amino acids such as valine, to avoid such errors it has two additional distinct tRNA(Ile)-dependent editing activities. One activity is designated as 'pretransfer' editing and involves the hydrolysis of activated Val-AMP. The other activity is designated 'posttransfer' editing and involves deacylation of mischarged Val-tRNA(Ile). The chain is Isoleucine--tRNA ligase from Haemophilus influenzae (strain PittEE).